A 718-amino-acid polypeptide reads, in one-letter code: MAHLLGSQACMDSLRKDLTDLQGTIVDVFSRAGPVRFPSWKFPDRVACDLDMVALLEHYDHVPGDPEFTQLSHAVLLELVIDRLLLLLQSCASYLENLSVEQMMPPARAAGPCMSVGLTVRRFWSNLLRLGLLYQQAVPQKRANQGEISITKPTAKGEPARSPECMTAKFIKPPSPVPGLPLICQGLQSIPVRVSLRSPGGTSEKTKSVYSQTVETALVPCDACTSVQGSLWEVGKVVISLCQSQNLPSSLGQFQKLVKDSLGLKPLPAATVGHWAAEQSKDLTRLNKHVGALTQLVGPLRAQLEDAEGQKDGLRKQVSKLEQALQQEQGQRQRQTEEAERTLAKCEHDRHQLLTETCDLKTKVAVLEGDLKQQQKSIQAMEAKAQQLEEEGERRAAAERQVQQLEEQVQLLAGRLDGASQQIRWASTELDKEKARVDSMVRHQESLQAKQRTLLQQLDCLDQEREELRGSLDEAEAQRSELEEQLQSLQSDREQEQCQLQAQQELLQSLQQEKQDLEQVTTDLQLTISELRQQLEELKERERLLVAFPDLHQPEEAQIQSSSNVTQDMERQVQANAIRIQVLQEENKRLQSMLTKIREVAQQGGLKMVPQGQLWSPPYKGIQGATPPAQAQSAFSGLTGRRQSPGSRTSSTGRTHPGGLRTSPSRQPGGLPSKFSLGDGSHSASCTQNPIRALARLRRKLSPNRQAGSTYQPQERPT.

Positions 300–603 form a coiled coil; it reads LRAQLEDAEG…LTKIREVAQQ (304 aa). Residues 469–482 show a composition bias toward basic and acidic residues; the sequence is RGSLDEAEAQRSEL. Disordered stretches follow at residues 469–490 and 617–690; these read RGSL…QSLQ and PPYK…TQNP. Low complexity predominate over residues 639-659; it reads TGRRQSPGSRTSSTGRTHPGG.

The chain is Coiled-coil domain-containing protein 157 (Ccdc157) from Mus musculus (Mouse).